The sequence spans 141 residues: Hemoglobin subunit alpha-D (141 aa).

A Globin domain is found at 1–141 (MLTADDKKLI…VAAVLAEKYR (141 aa)). Positions 58 and 87 each coordinate heme b.

The protein belongs to the globin family. Heterotetramer of two alpha-D chains and two beta chains. As to expression, red blood cells.

Involved in oxygen transport from the lung to the various peripheral tissues. This is Hemoglobin subunit alpha-D (HBAD) from Aegypius monachus (Cinereous vulture).